Here is a 440-residue protein sequence, read N- to C-terminus: Probable exopolygalacturonase B (440 aa).

The first 20 residues, 1-20 (MRLHFLPLVALCATTASSLA), serve as a signal peptide directing secretion. N-linked (GlcNAc...) asparagine glycans are attached at residues N65, N190, and N230. Residue D260 is the Proton donor of the active site. A disulfide bridge connects residues C262 and C279. N268 and N280 each carry an N-linked (GlcNAc...) asparagine glycan. H283 is a catalytic residue. 3 N-linked (GlcNAc...) asparagine glycosylation sites follow: N307, N334, and N371. An intrachain disulfide couples C397 to C403. N412 carries an N-linked (GlcNAc...) asparagine glycan.

It belongs to the glycosyl hydrolase 28 family.

The protein localises to the secreted. The enzyme catalyses [(1-&gt;4)-alpha-D-galacturonosyl](n) + H2O = alpha-D-galacturonate + [(1-&gt;4)-alpha-D-galacturonosyl](n-1). Functionally, specific in hydrolyzing the terminal glycosidic bond of polygalacturonic acid and oligogalacturonates. The sequence is that of Probable exopolygalacturonase B (pgxB) from Emericella nidulans (strain FGSC A4 / ATCC 38163 / CBS 112.46 / NRRL 194 / M139) (Aspergillus nidulans).